A 178-amino-acid polypeptide reads, in one-letter code: Neuroblastoma suppressor of tumorigenicity 1 (178 aa).

The first 16 residues, 1–16 (MLWVLVGAVLPVMLLA), serve as a signal peptide directing secretion. 5 disulfides stabilise this stretch: Cys-34–Cys-84, Cys-48–Cys-98, Cys-58–Cys-117, Cys-62–Cys-119, and Cys-81–Cys-122. In terms of domain architecture, CTCK spans 34 to 123 (CEAKNITQIV…IVHCSCQACG (90 aa)). Positions 132–178 (NVYVQGEDSPGSQPGPHSHAHPHPGGQTPEPEEPPGAPQVEEEGAED) are disordered. Low complexity predominate over residues 140 to 160 (SPGSQPGPHSHAHPHPGGQTP).

It belongs to the DAN family. Homodimer.

It is found in the secreted. Possible candidate as a tumor suppressor gene of neuroblastoma. May play an important role in preventing cells from entering the final stage (G1/S) of the transformation process. This chain is Neuroblastoma suppressor of tumorigenicity 1 (Nbl1), found in Mus musculus (Mouse).